The chain runs to 494 residues: Lysine--tRNA ligase (494 aa).

Positions 405 and 412 each coordinate Mg(2+).

This sequence belongs to the class-II aminoacyl-tRNA synthetase family. In terms of assembly, homodimer. Mg(2+) is required as a cofactor.

The protein resides in the cytoplasm. The catalysed reaction is tRNA(Lys) + L-lysine + ATP = L-lysyl-tRNA(Lys) + AMP + diphosphate. This Geobacillus stearothermophilus (Bacillus stearothermophilus) protein is Lysine--tRNA ligase (lysS).